A 1237-amino-acid chain; its full sequence is uncharacterized protein (1237 aa).

Residues 591–712 form the MHD1 domain; the sequence is KDMLEIYSDL…IVLSKYTQWT (122 aa). The 121-residue stretch at 786 to 906 folds into the C2 domain; that stretch reads LIEALDVAES…GDYLPREEWF (121 aa). The region spanning 1014–1130 is the MHD2 domain; sequence EAAIYELLDY…KPTDFLLQEC (117 aa).

This is an uncharacterized protein from Schizosaccharomyces pombe (strain 972 / ATCC 24843) (Fission yeast).